The sequence spans 413 residues: MNLLTGRNMVERSSKFLFIVVGSVLFMLILYQYVAPGMMNFGSPHGYMLEDDADLFPTPDPHYVKKFYFPIRDLERTVDFEIKGDDVIVFLHIQKTGGTTFGRHLVQNVRLEVPCDCRPGQKKCTCYRPNRKETWLFSRFSTGWSCGLHADWTELTNCVPGVLNKKESRMKNQRKFYYITLLRDPVSRYLSEWRHVQRGATWKTSLHMCDGRTPTPEELPPCYEGTDWSGCTLQQFMDCPYNLANNRQVRMLADLSLVGCYNMSFIPEKKRAQVLLESAKKNLRDMAFFGLTEFQRKTQYLFERTFRLKFIRPFMQYNSTRAAGVDLDNDTIQRIEELNDLDMQLYDYARDLFQQRYMYKRQLERREQRLKNQPLFPFRRTSSSDSTFRDDAPESEGSRLPTEDYMNHIINRW.

Residues Met-9–Lys-15 are Cytoplasmic-facing. A helical; Signal-anchor for type II membrane protein transmembrane segment spans residues Phe-16–Pro-36. Over Gly-37–Trp-413 the chain is Lumenal. His-92 to Thr-100 contributes to the 3'-phosphoadenylyl sulfate binding site. Residues Lys-122 to Lys-123, Arg-139, Trp-144, and His-149 contribute to the substrate site. The active-site Proton acceptor is His-149. Arg-183 and Ser-191 together coordinate 3'-phosphoadenylyl sulfate. Substrate is bound by residues His-195 and Trp-202. Asn-262 is a glycosylation site (N-linked (GlcNAc...) asparagine). Position 315–317 (Met-315–Tyr-317) interacts with 3'-phosphoadenylyl sulfate. Residue Asn-318 is glycosylated (N-linked (GlcNAc...) asparagine). Residue Arg-321–Ala-322 participates in 3'-phosphoadenylyl sulfate binding. Asn-329 is a glycosylation site (N-linked (GlcNAc...) asparagine). The disordered stretch occupies residues Pro-374–Pro-401.

The protein belongs to the sulfotransferase 6 family. As to expression, during somitogenesis, first expressed in polster and presumptive forebrain. During mid-somitogenesis, expressed in eye, hindbrain and anterior spinal cord. During late somitogenesis, strong expression in eye and hindbrain, decreased levels in midbrain and anterior spinal cord. At 24 hours post-fertilization (hpf), expressed in neural retina and lens, brain and anterior spinal cord. At 36 hpf, retinal expression is confined to the ciliary marginal zone and there is strong expression in tectum, rhombomeres and otic vesicle. At 48 hpf, expressed in retinal ganglion cells and in tectum, rhombomeres and pectoral fin. Not detected in the vasculature during embryogenesis.

The protein localises to the membrane. It carries out the reaction alpha-D-glucosaminyl-[heparan sulfate](n) + 3'-phosphoadenylyl sulfate = 6-sulfo-alpha-D-glucosaminyl-[heparan sulfate](n) + adenosine 3',5'-bisphosphate + H(+). Its function is as follows. 6-O-sulfation enzyme which catalyzes the transfer of sulfate from 3'-phosphoadenosine 5'-phosphosulfate (PAPS) to position 6 of the N-sulfoglucosamine residue (GlcNS) of heparan sulfate. The chain is Heparan-sulfate 6-O-sulfotransferase 1-A from Danio rerio (Zebrafish).